We begin with the raw amino-acid sequence, 236 residues long: ATP synthase subunit a (236 aa).

5 helical membrane passes run 17–37 (WTNL…LFGL), 76–96 (SFFV…GLII), 113–133 (PVVT…AGVA), 170–190 (IFGN…MAFS), and 196–216 (MIVS…IGAI).

This sequence belongs to the ATPase A chain family. As to quaternary structure, F-type ATPases have 2 components, CF(1) - the catalytic core - and CF(0) - the membrane proton channel. CF(1) has five subunits: alpha(3), beta(3), gamma(1), delta(1), epsilon(1). CF(0) has three main subunits: a(1), b(2) and c(9-12). The alpha and beta chains form an alternating ring which encloses part of the gamma chain. CF(1) is attached to CF(0) by a central stalk formed by the gamma and epsilon chains, while a peripheral stalk is formed by the delta and b chains.

It is found in the cell membrane. In terms of biological role, key component of the proton channel; it plays a direct role in the translocation of protons across the membrane. This is ATP synthase subunit a from Limosilactobacillus fermentum (strain NBRC 3956 / LMG 18251) (Lactobacillus fermentum).